The following is a 117-amino-acid chain: UPF0375 protein Y45F10C.2 (117 aa).

Residues 1-20 (MNSFVSTVLLLSVTIALVSG) form the signal peptide.

It belongs to the UPF0375 family. As to expression, expressed in the uterine epithelium.

It localises to the secreted. Negatively regulates the egg-laying rate by promoting retention of fertilized eggs. The sequence is that of UPF0375 protein Y45F10C.2 from Caenorhabditis elegans.